The chain runs to 249 residues: INO80 complex subunit 1 (249 aa).

2 consecutive C2H2-type zinc fingers follow at residues 73 to 100 (YTCEWDDCPRKGMVQTSRFALVAHLRSH) and 106 to 131 (FICSVPECDRSFTRSDALAKHMRTVH).

As to quaternary structure, component of the INO80 chromatin remodeling complex.

The protein localises to the nucleus. Its subcellular location is the cytoplasm. Component of the INO80 complex which remodels chromatin by shifting nucleosomes and is involved in DNA repair. The protein is INO80 complex subunit 1 (iec1) of Schizosaccharomyces pombe (strain 972 / ATCC 24843) (Fission yeast).